We begin with the raw amino-acid sequence, 191 residues long: Calcium and integrin-binding protein 1 (191 aa).

Glycine 2 carries the N-myristoyl glycine lipid modification. EF-hand domains follow at residues 103 to 138 and 148 to 183; these read TPDI…LTGE and EMKQ…SPDF. Residues aspartate 116, aspartate 118, aspartate 120, threonine 122, aspartate 127, aspartate 161, aspartate 163, aspartate 165, threonine 167, and glutamate 172 each coordinate Ca(2+).

Monomer. Interacts with the heterodimeric integrin alpha-IIb/beta3 (ITGA2B-ITGB3). Interacts with ITGA2B (via cytoplasmic domain); the interaction is direct and calcium-dependent. Interacts with the protein kinases PLK2/SNK and PRKDC (via the region immediately upstream of the kinase domain). Interacts with PLK3; the interaction inhibits PLK3 kinase activity. Interacts with PSEN2. Interacts (via C-terminus) with F8. Interacts with NBR1 (via C-terminus). Interacts with FEZ1 (via C-terminus). Interacts with UBR5 (via C-terminus); the interaction is sensitive to DNA damage, and may target CIB1 for ubiquitin-mediated degradation. Interacts with IFI6; the interaction is direct. Interacts with BCL2. Interacts with ITPR3; the interaction occurs in a calcium dependent manner. Interacts with PTK2/FAK1. Interacts with MAP3K5; the interaction inhibits MAP3K5 activation by phosphorylation, and its subsequent interaction with TRAF2. Interacts (via C-terminal region) with STMN2 (via the N-terminal region); the interaction is direct, occurs in a calcium-dependent manner and attenuates the STMN2-induced neurite outgrowth inhibition. Interacts with SPHK1, the interaction occurs in a calcium-dependent manner. Interacts with ITGA2B (via C-terminal cytoplasmic tail); the interaction occurs upon platelet aggregation and is stabilized/increased in a calcium and magnesium-dependent manner. Interacts with PAK1 (via N-terminal region); the interaction is direct and occurs in a calcium-dependent manner. Interacts with RAC3 (via C-terminal region); the interaction induces their association with the cytoskeleton upon alpha-IIb/beta3 integrin-mediated adhesion. Interacts with ITGA5 and ITGAV. Interacts with MYO1C. Interacts with ITGA2B (via C-terminal cytoplasmic tail region). Interacts (via C-terminal region) with PPP3R1; the interaction increases upon cardiomyocytes hypertrophy. Interacts with CACNA1C; the interaction increases upon cardiomyocytes hypertrophy. Interacts with TAS1R2 (via C-terminus); this interaction is independent of the myristoylation state of CIB1. Interacts and forms a complex with TMC6 and TMC8; the interaction stabilizes each component of the complex.

It localises to the membrane. The protein resides in the cell membrane. Its subcellular location is the sarcolemma. It is found in the apical cell membrane. The protein localises to the cell projection. It localises to the ruffle membrane. The protein resides in the filopodium tip. Its subcellular location is the growth cone. It is found in the lamellipodium. The protein localises to the cytoplasm. It localises to the cytoskeleton. The protein resides in the microtubule organizing center. Its subcellular location is the centrosome. It is found in the perinuclear region. The protein localises to the nucleus. It localises to the neuron projection. The protein resides in the perikaryon. In terms of biological role, calcium-binding protein that plays a role in the regulation of numerous cellular processes, such as cell differentiation, cell division, cell proliferation, cell migration, thrombosis, angiogenesis, cardiac hypertrophy and apoptosis. Involved in bone marrow megakaryocyte differentiation by negatively regulating thrombopoietin-mediated signaling pathway. Participates in the endomitotic cell cycle of megakaryocyte, a form of mitosis in which both karyokinesis and cytokinesis are interrupted. Plays a role in integrin signaling by negatively regulating alpha-IIb/beta3 activation in thrombin-stimulated megakaryocytes preventing platelet aggregation. Up-regulates PTK2/FAK1 activity, and is also needed for the recruitment of PTK2/FAK1 to focal adhesions; it thus appears to play an important role in focal adhesion formation. Positively regulates cell migration on fibronectin in a CDC42-dependent manner, the effect being negatively regulated by PAK1. Functions as a negative regulator of stress activated MAP kinase (MAPK) signaling pathways. Down-regulates inositol 1,4,5-trisphosphate receptor-dependent calcium signaling. Involved in sphingosine kinase SPHK1 translocation to the plasma membrane in a N-myristoylation-dependent manner preventing TNF-alpha-induced apoptosis. Regulates serine/threonine-protein kinase PLK3 activity for proper completion of cell division progression. Plays a role in microtubule (MT) dynamics during neuronal development; disrupts the MT depolymerization activity of STMN2 attenuating NGF-induced neurite outgrowth and the MT reorganization at the edge of lamellipodia. Promotes cardiomyocyte hypertrophy via activation of the calcineurin/NFAT signaling pathway. Stimulates calcineurin PPP3R1 activity by mediating its anchoring to the sarcolemma. In ischemia-induced (pathological or adaptive) angiogenesis, stimulates endothelial cell proliferation, migration and microvessel formation by activating the PAK1 and ERK1/ERK2 signaling pathway. Also promotes cancer cell survival and proliferation. May regulate cell cycle and differentiation of spermatogenic germ cells, and/or differentiation of supporting Sertoli cells. Forms a complex with TMC6/EVER1 and TMC8/EVER2 in lymphocytes and keratynocytes where CIB1 stabilizes TMC6 and TMC8 levels and reciprocally. The chain is Calcium and integrin-binding protein 1 (CIB1) from Bos taurus (Bovine).